The sequence spans 1157 residues: Cell division cycle and apoptosis regulator protein 1 (1157 aa).

Disordered stretches follow at residues 289–365 (PVRI…PRRV) and 608–641 (LQGD…WSKL). 2 stretches are compositionally biased toward basic and acidic residues: residues 300-341 (RRIE…DRSP) and 348-359 (ERSPRRERERSP). A coiled-coil region spans residues 601-625 (KQQLVDKLQGDRKEADGEQEEEDKE). A compositionally biased stretch (acidic residues) spans 617-628 (GEQEEEDKEDGD). The region spanning 643 to 677 (PKIMKVNDLRKELESRTLSSKGLKSQLIARLTKQL) is the SAP domain. Composition is skewed to basic and acidic residues over residues 685–694 (EQKELEKCEK), 701–721 (ERKS…ELER), 804–824 (EEKK…RKED), and 838–861 (SSDD…KEDY). 2 disordered regions span residues 685–721 (EQKE…ELER) and 804–926 (EEKK…KDKK). Residues 862–896 (REEDDPDYENQDDYEPIAAEEDDGDYDDREDDDDD) are compositionally biased toward acidic residues. The span at 897-926 (SSSKDKREDKRDGNRYSKERQSKDKEKDKK) shows a compositional bias: basic and acidic residues. Residues 1043-1128 (DVGSLLQKLE…DQLTNTIKNL (86 aa)) are a coiled coil. Ser-1157 carries the phosphoserine modification.

The protein localises to the cytoplasm. Its subcellular location is the perinuclear region. Transcriptional coactivator for nuclear receptors which may play an important role in regulating cell growth and apoptosis. This is Cell division cycle and apoptosis regulator protein 1 (ccar1) from Xenopus laevis (African clawed frog).